A 434-amino-acid chain; its full sequence is Gamma-enolase (434 aa).

The substrate site is built by H158 and E167. E210 functions as the Proton donor in the catalytic mechanism. Mg(2+) contacts are provided by D245, E293, and D318. Substrate contacts are provided by E293 and D318. The Proton acceptor role is filled by K343. Residues 370 to 373 and K394 each bind substrate; that span reads SHRS.

It belongs to the enolase family. Homodimer. The cofactor is Mg(2+). As to expression, expressed in the brain and, to much less but significant extents, in the pituitary and adrenal glands.

Its subcellular location is the cytoplasm. It carries out the reaction (2R)-2-phosphoglycerate = phosphoenolpyruvate + H2O. It functions in the pathway carbohydrate degradation; glycolysis; pyruvate from D-glyceraldehyde 3-phosphate: step 4/5. In Gallus gallus (Chicken), this protein is Gamma-enolase (ENO2).